Reading from the N-terminus, the 1415-residue chain is DNA-directed RNA polymerase subunit beta' (1415 aa).

4 residues coordinate Zn(2+): cysteine 72, cysteine 74, cysteine 87, and cysteine 90. Positions 463, 465, and 467 each coordinate Mg(2+). Zn(2+) is bound by residues cysteine 812, cysteine 886, cysteine 893, and cysteine 896.

Belongs to the RNA polymerase beta' chain family. The RNAP catalytic core consists of 2 alpha, 1 beta, 1 beta' and 1 omega subunit. When a sigma factor is associated with the core the holoenzyme is formed, which can initiate transcription. Mg(2+) is required as a cofactor. Requires Zn(2+) as cofactor.

It catalyses the reaction RNA(n) + a ribonucleoside 5'-triphosphate = RNA(n+1) + diphosphate. In terms of biological role, DNA-dependent RNA polymerase catalyzes the transcription of DNA into RNA using the four ribonucleoside triphosphates as substrates. The polypeptide is DNA-directed RNA polymerase subunit beta' (Dinoroseobacter shibae (strain DSM 16493 / NCIMB 14021 / DFL 12)).